The sequence spans 82 residues: MAHKKGASSSRNGRDSNPQYLGVKKFGGEAVVAGNIIVRQRGTNFHPGHNVGMGKDHTLFALTDGSVKFGVRRDRKVVDVIA.

Residues 1-20 (MAHKKGASSSRNGRDSNPQY) are disordered. Over residues 7–19 (ASSSRNGRDSNPQ) the composition is skewed to polar residues.

This sequence belongs to the bacterial ribosomal protein bL27 family.

The sequence is that of Large ribosomal subunit protein bL27 from Bifidobacterium longum (strain NCC 2705).